The following is an 81-amino-acid chain: Cytochrome b559 subunit alpha (81 aa).

Residues 21–35 (VIHALTIPALFLAGW) traverse the membrane as a helical segment. His-23 serves as a coordination point for heme.

The protein belongs to the PsbE/PsbF family. Heterodimer of an alpha subunit and a beta subunit. PSII is composed of 1 copy each of membrane proteins PsbA, PsbB, PsbC, PsbD, PsbE, PsbF, PsbH, PsbI, PsbJ, PsbK, PsbL, PsbM, PsbT, PsbX, PsbY, PsbZ, Psb30/Ycf12, peripheral proteins PsbO, CyanoQ (PsbQ), PsbU, PsbV and a large number of cofactors. It forms dimeric complexes. It depends on heme b as a cofactor.

Its subcellular location is the cellular thylakoid membrane. Functionally, this b-type cytochrome is tightly associated with the reaction center of photosystem II (PSII). PSII is a light-driven water:plastoquinone oxidoreductase that uses light energy to abstract electrons from H(2)O, generating O(2) and a proton gradient subsequently used for ATP formation. It consists of a core antenna complex that captures photons, and an electron transfer chain that converts photonic excitation into a charge separation. This is Cytochrome b559 subunit alpha from Synechococcus sp. (strain JA-2-3B'a(2-13)) (Cyanobacteria bacterium Yellowstone B-Prime).